The sequence spans 322 residues: MTPANPKPLANHHIAVLLGGPSAEREVSLVTGAAYAAALERLGARVSRVDPGKDVAQVLTALAPDLVFNGLHGRWGEDGCVQGVLETLGLAYTHSGVLASALAMDKAKSKAVLAAAGIPVPGGGLFDRHDVAQGHVMPPPYVVKPNAEGSSVGVSLVFEGANGPPRQLAAPDWAFGEQVMVEPYIPGLELAVAVVGESNGPRALAVTEIRSSTGFYDYDAKYSQGGSIHVLPAPIPDAVRDRALHLAKLGHTALGCQGVTRSDFRYDDINDLLVLLEVNTQPGMTPTSLVPEQADHAGVSFDRLVFWIVEDAYARRFAGGIA.

The region spanning 110–310 (KAVLAAAGIP…FDRLVFWIVE (201 aa)) is the ATP-grasp domain. 137–191 (MPPPYVVKPNAEGSSVGVSLVFEGANGPPRQLAAPDWAFGEQVMVEPYIPGLELA) contacts ATP. Mg(2+) is bound by residues aspartate 263, glutamate 277, and asparagine 279.

It belongs to the D-alanine--D-alanine ligase family. The cofactor is Mg(2+). Mn(2+) serves as cofactor.

It localises to the cytoplasm. The enzyme catalyses 2 D-alanine + ATP = D-alanyl-D-alanine + ADP + phosphate + H(+). It functions in the pathway cell wall biogenesis; peptidoglycan biosynthesis. Cell wall formation. In Caulobacter sp. (strain K31), this protein is D-alanine--D-alanine ligase.